Here is a 458-residue protein sequence, read N- to C-terminus: Sulfite efflux pump SSU1 (458 aa).

Over 1 to 11 the chain is Cytoplasmic; sequence MVANWVLALTR. Residues 12 to 32 form a helical membrane-spanning segment; that stretch reads QFDPFMFMMVMGVGISSNILY. Residues 33–48 are Extracellular-facing; sequence SFPYPARWLRICSYIM. The helical transmembrane segment at 49 to 69 threads the bilayer; sequence FAIACLIFIAVQALQILHLIV. Over 70–89 the chain is Cytoplasmic; sequence YIKEKSFREYFNDFFRNMKH. Residues 90-110 traverse the membrane as a helical segment; that stretch reads NLFWGTYPMGLVTIINFLGAL. At 111 to 135 the chain is on the extracellular side; sequence SKANTTKSPTNARNLMIFVYVLWWY. Residues 136 to 156 traverse the membrane as a helical segment; sequence DLAVCLVIAWGISFLIWHDYY. Topologically, residues 157–176 are cytoplasmic; the sequence is PLEGIGNYPSYNIKMASENM. The chain crosses the membrane as a helical span at residues 177–197; sequence KSVLLLDIIPLVVVASSCGTF. Over 198 to 220 the chain is Extracellular; the sequence is TMSEIFFHAFNRNIQLITLVICA. Residues 221–241 form a helical membrane-spanning segment; the sequence is LTWLHAIIFVFILIAIYFWSL. Topologically, residues 242–252 are cytoplasmic; sequence YINKIPPMTQV. The chain crosses the membrane as a helical span at residues 253–275; that stretch reads FTLFLLLGPMGQGSFGVLLLTDN. The Extracellular segment spans residues 276–309; it reads IKKYAGKYYPTDNITREQEILTIAVPWCFKILGM. A helical transmembrane segment spans residues 310-330; sequence VSAMALLAMGYFFTVISVVSI. Residues 331–350 lie on the Cytoplasmic side of the membrane; it reads LSYYNKKEIENETGKVKRVY. The helical transmembrane segment at 351–371 threads the bilayer; it reads TFHKGFWGMTFPMGTMSLGNE. Residues 372 to 387 lie on the Extracellular side of the membrane; the sequence is ELYVQYNQYVPLYAFR. The helical transmembrane segment at 388–408 threads the bilayer; sequence VLGTIYGGVCVCWSILCLLCT. Over 409–458 the chain is Cytoplasmic; that stretch reads LHEYSKKMLHAARKSSLFSESGTEKTTVSPYNSIESVEESNSALDFTRLA. Phosphoserine is present on residues Ser-444, Ser-448, and Ser-450.

This sequence belongs to the tellurite-resistance/dicarboxylate transporter (TDT) family.

It localises to the cell membrane. Its function is as follows. Involved in efflux of free sulfite. Mutations in the SSU1 gene cause sensitivity to sulfite. The protein is Sulfite efflux pump SSU1 (SSU1) of Saccharomyces cerevisiae (strain ATCC 204508 / S288c) (Baker's yeast).